The sequence spans 484 residues: Malonate-semialdehyde dehydrogenase 3 (484 aa).

NAD(+) contacts are provided by Phe-152, Lys-176, Glu-179, Arg-180, and Ser-229. Cys-284 acts as the Nucleophile in catalysis. Glu-384 provides a ligand contact to NAD(+).

Belongs to the aldehyde dehydrogenase family. IolA subfamily. Homotetramer.

The catalysed reaction is 3-oxopropanoate + NAD(+) + CoA + H2O = hydrogencarbonate + acetyl-CoA + NADH + H(+). It catalyses the reaction 2-methyl-3-oxopropanoate + NAD(+) + CoA + H2O = propanoyl-CoA + hydrogencarbonate + NADH + H(+). It participates in polyol metabolism; myo-inositol degradation into acetyl-CoA; acetyl-CoA from myo-inositol: step 7/7. In terms of biological role, catalyzes the oxidation of malonate semialdehyde (MSA) and methylmalonate semialdehyde (MMSA) into acetyl-CoA and propanoyl-CoA, respectively. Is involved in a myo-inositol catabolic pathway. Bicarbonate, and not CO2, is the end-product of the enzymatic reaction. This Geobacillus kaustophilus (strain HTA426) protein is Malonate-semialdehyde dehydrogenase 3.